Here is a 119-residue protein sequence, read N- to C-terminus: MNLAAYYPVLLFLLVGTGLGIALVSIGKLLGPNKPDVEKNAPYECGFEAFEDARMKFDVRYYLVAILFIIFDLETAFLFPWGVALRDIGWPGFIAMMIFLLEFLLGFAYIWKKGGLDWE.

The next 3 helical transmembrane spans lie at 7-27 (YPVL…VSIG), 63-83 (LVAI…PWGV), and 88-108 (IGWP…LGFA).

Belongs to the complex I subunit 3 family. As to quaternary structure, NDH-1 is composed of 14 different subunits. Subunits NuoA, H, J, K, L, M, N constitute the membrane sector of the complex.

It localises to the cell inner membrane. The catalysed reaction is a quinone + NADH + 5 H(+)(in) = a quinol + NAD(+) + 4 H(+)(out). NDH-1 shuttles electrons from NADH, via FMN and iron-sulfur (Fe-S) centers, to quinones in the respiratory chain. The immediate electron acceptor for the enzyme in this species is believed to be ubiquinone. Couples the redox reaction to proton translocation (for every two electrons transferred, four hydrogen ions are translocated across the cytoplasmic membrane), and thus conserves the redox energy in a proton gradient. In Burkholderia ambifaria (strain MC40-6), this protein is NADH-quinone oxidoreductase subunit A.